Consider the following 824-residue polypeptide: Intraflagellar transport protein 88 homolog (824 aa).

2 disordered regions span residues 1–27 and 111–134; these read MENV…PAYD and AFDP…DSPE. TPR repeat units lie at residues 196-229, 232-265, 271-304, 415-448, 450-483, 484-517, 518-551, 552-585, 586-619, 620-653, and 654-687; these read YSVL…KMFS, GRLK…IPSV, IKIM…APSL, NDLE…DSRV, SAAA…DRYN, PSAL…DSSC, TEAL…LRNS, AQVL…VPTD, SQAL…FPSN, IEVI…QPTQ, and VKWQ…FPEN. A compositionally biased stretch (basic and acidic residues) spans 721–731; that stretch reads EMREQRIKSGR. Positions 721–824 are disordered; it reads EMREQRIKSG…EELGDDLLPE (104 aa). Residues 748 to 757 show a composition bias toward polar residues; the sequence is DSGQNNSASS. Positions 797–808 are enriched in basic and acidic residues; the sequence is ERPKTAAKKRID. Residues 809–824 are compositionally biased toward acidic residues; it reads EDDFADEELGDDLLPE.

Component of the IFT complex B, at least composed of IFT20, IFT22, IFT25, IFT27, IFT46, IFT52, TRAF3IP1/IFT54, IFT57, IFT74, IFT80, IFT81, and IFT88. Interacts with IFT20, IFT22, IFT25, IFT27, IFT52, TRAF3IP1, IFT74, IFT80 and IFT81. Interacts with IFT172. Interacts with IFT57. Interacts with IFT46. Interacts with IFT70B. Interacts with C2CD3. Interacts with ENTR1 (via N-terminus). Interacts with LRRC56. Interacts with DZIP1. Interacts with CCDC38. Interacts with CCDC146. Interacts with CFAP53. In terms of tissue distribution, testis.

The protein resides in the cytoplasm. It localises to the cytoskeleton. It is found in the microtubule organizing center. Its subcellular location is the centrosome. The protein localises to the centriole. The protein resides in the cilium basal body. It localises to the cell projection. It is found in the cilium. Its subcellular location is the flagellum. Its function is as follows. Positively regulates primary cilium biogenesis. Also involved in autophagy since it is required for trafficking of ATG16L and the expansion of the autophagic compartment. The sequence is that of Intraflagellar transport protein 88 homolog (Ift88) from Mus musculus (Mouse).